A 165-amino-acid polypeptide reads, in one-letter code: Type IV major pilin protein PilE1 (165 aa).

The propeptide at 1-7 (MNTLQKG) is leader sequence. N-methylphenylalanine is present on phenylalanine 8. A helical membrane pass occupies residues 8–28 (FTLIELMIVIAIVGILAAVAL). Serine 70 is a glycosylation site (O-linked (DADDGlc) serine). Position 75 is an O-(2-aminoethylphosphoryl)serine; alternate (serine 75). Serine 75 bears the O-(2-cholinephosphoryl)serine; alternate mark. Serine 75 carries the phosphoserine; alternate modification. Serine 101 is modified (O-(sn-1-glycerophosphoryl)serine; partial). The cysteines at positions 128 and 158 are disulfide-linked. Over residues 137-153 (DDTVADAKDGKEIDTKH) the composition is skewed to basic and acidic residues. The interval 137-165 (DDTVADAKDGKEIDTKHLPSTCRDNFDAK) is disordered.

Belongs to the N-Me-Phe pilin family. As to quaternary structure, the pili are polar flexible filaments of about 5.4 nanometers diameter and 2.5 micrometers average length; they consist of only a single polypeptide chain arranged in a helical configuration of five subunits per turn in the assembled pilus. The O-linked glycan identified as Gal-GlcNAc disaccharide in PubMed:7477282 and PubMed:10048019 is now identified as either a hexosyl-diacetamidotrideoxyhexoside (DATDHex) by mass spectrometry in PubMed:15249686, or alpha-D-galactopyranosyl-(1-&gt;3)-2,4-diacetamido-2,4-dideoxy-beta-D-glucopyranoside (DADDGlc) by X-ray diffraction in PubMed:16949362. It is not clear whether there is a chemical difference in the glycosylation of the two derivatives of strain MS11 used in these experiments, or not. In terms of processing, in some MS11 derivative strains, Ser-75 is modified to O-(2-aminoethylphosphoryl)serine, and in some other derivatives that can be secondarily modified to O-(2-cholinephosphoryl)serine by N-methylation.

The protein resides in the fimbrium. It localises to the membrane. In terms of biological role, major component of the type IV pilus (T4P) that plays a role in cellular adherence, microcolony formation, resistance to neutrophil mediated killing, twitching motility as well as transformation. Mediates the attachment and the formation of bacterial microcolonies on host epithelial cells. Mechanistically, pili retractation induces host NF-kappa-B activation in infected cells, which is temporally associated with the formation of gonococcal microcolonies. In Neisseria gonorrhoeae, this protein is Type IV major pilin protein PilE1 (pilE1).